We begin with the raw amino-acid sequence, 340 residues long: Phosphate acyltransferase (340 aa).

Belongs to the PlsX family. In terms of assembly, homodimer. Probably interacts with PlsY.

The protein resides in the cytoplasm. It catalyses the reaction a fatty acyl-[ACP] + phosphate = an acyl phosphate + holo-[ACP]. Its pathway is lipid metabolism; phospholipid metabolism. Catalyzes the reversible formation of acyl-phosphate (acyl-PO(4)) from acyl-[acyl-carrier-protein] (acyl-ACP). This enzyme utilizes acyl-ACP as fatty acyl donor, but not acyl-CoA. The chain is Phosphate acyltransferase from Nostoc punctiforme (strain ATCC 29133 / PCC 73102).